The primary structure comprises 559 residues: Potassium-transporting ATPase potassium-binding subunit (559 aa).

12 helical membrane-spanning segments follow: residues G5–T25, L63–L83, V131–L151, I173–G193, V254–V274, A282–E302, F327–V347, A356–V376, G379–G399, M416–M436, L483–I503, and A525–P545.

The protein belongs to the KdpA family. In terms of assembly, the system is composed of three essential subunits: KdpA, KdpB and KdpC.

The protein localises to the cell inner membrane. In terms of biological role, part of the high-affinity ATP-driven potassium transport (or Kdp) system, which catalyzes the hydrolysis of ATP coupled with the electrogenic transport of potassium into the cytoplasm. This subunit binds the periplasmic potassium ions and delivers the ions to the membrane domain of KdpB through an intramembrane tunnel. This chain is Potassium-transporting ATPase potassium-binding subunit, found in Klebsiella pneumoniae (strain 342).